The chain runs to 874 residues: Alanine--tRNA ligase (874 aa).

4 residues coordinate Zn(2+): His-564, His-568, Cys-665, and His-669.

The protein belongs to the class-II aminoacyl-tRNA synthetase family. Zn(2+) is required as a cofactor.

Its subcellular location is the cytoplasm. It carries out the reaction tRNA(Ala) + L-alanine + ATP = L-alanyl-tRNA(Ala) + AMP + diphosphate. Catalyzes the attachment of alanine to tRNA(Ala) in a two-step reaction: alanine is first activated by ATP to form Ala-AMP and then transferred to the acceptor end of tRNA(Ala). Also edits incorrectly charged Ser-tRNA(Ala) and Gly-tRNA(Ala) via its editing domain. In Burkholderia cenocepacia (strain HI2424), this protein is Alanine--tRNA ligase.